Here is a 101-residue protein sequence, read N- to C-terminus: Small ribosomal subunit protein uS14 (101 aa).

The protein belongs to the universal ribosomal protein uS14 family. As to quaternary structure, part of the 30S ribosomal subunit. Contacts proteins S3 and S10.

Its function is as follows. Binds 16S rRNA, required for the assembly of 30S particles and may also be responsible for determining the conformation of the 16S rRNA at the A site. The sequence is that of Small ribosomal subunit protein uS14 from Burkholderia mallei (strain NCTC 10247).